A 166-amino-acid chain; its full sequence is D-aminoacyl-tRNA deacylase (166 aa).

The short motif at 142–143 (GP) is the Gly-cisPro motif, important for rejection of L-amino acids element.

Belongs to the DTD family. In terms of assembly, homodimer.

It localises to the cytoplasm. The enzyme catalyses glycyl-tRNA(Ala) + H2O = tRNA(Ala) + glycine + H(+). It catalyses the reaction a D-aminoacyl-tRNA + H2O = a tRNA + a D-alpha-amino acid + H(+). Its function is as follows. An aminoacyl-tRNA editing enzyme that deacylates mischarged D-aminoacyl-tRNAs. Also deacylates mischarged glycyl-tRNA(Ala), protecting cells against glycine mischarging by AlaRS. Acts via tRNA-based rather than protein-based catalysis; rejects L-amino acids rather than detecting D-amino acids in the active site. By recycling D-aminoacyl-tRNA to D-amino acids and free tRNA molecules, this enzyme counteracts the toxicity associated with the formation of D-aminoacyl-tRNA entities in vivo and helps enforce protein L-homochirality. The polypeptide is D-aminoacyl-tRNA deacylase (Ralstonia nicotianae (strain ATCC BAA-1114 / GMI1000) (Ralstonia solanacearum)).